The primary structure comprises 53 residues: Conotoxin Ac4.3b (53 aa).

A propeptide spanning residues 1 to 11 (SDVRNAAVHER) is cleaved from the precursor. The residue at position 12 (glutamine 12) is a Pyrrolidone carboxylic acid. Glutamate 14 bears the 4-carboxyglutamate mark. Serine 18 carries an O-linked (HexNAc...) serine glycan. 3 positions are modified to 4-hydroxyproline: proline 28, proline 33, and proline 48. Proline 48 carries the proline amide modification. A propeptide spanning residues 49–53 (GRRND) is cleaved from the precursor.

Belongs to the conotoxin A superfamily. Post-translationally, contains 3 disulfide bonds. As to expression, expressed by the venom duct.

It is found in the secreted. Its function is as follows. Probable neurotoxin with ion channel inhibitor activity. The protein is Conotoxin Ac4.3b of Conus achatinus (Little frog cone).